The following is a 90-amino-acid chain: Putative sodium channel toxin Ts35 (90 aa).

Residues 1–22 form the signal peptide; sequence QDEVGLGSCSVIFVVGNEEGEA. Residues 23–87 enclose the LCN-type CS-alpha/beta domain; the sequence is KDGYAVGGDR…WGNPTLGPCL (65 aa). Disulfide bonds link Cys-33–Cys-86, Cys-37–Cys-61, Cys-46–Cys-66, and Cys-50–Cys-68.

The protein belongs to the long (4 C-C) scorpion toxin superfamily. Sodium channel inhibitor family. In terms of tissue distribution, expressed by the venom gland.

Its subcellular location is the secreted. In terms of biological role, putative sodium channel toxin. This is Putative sodium channel toxin Ts35 from Tityus serrulatus (Brazilian scorpion).